The sequence spans 341 residues: Phosphoribosylformylglycinamidine cyclo-ligase (341 aa).

Belongs to the AIR synthase family.

Its subcellular location is the cytoplasm. It catalyses the reaction 2-formamido-N(1)-(5-O-phospho-beta-D-ribosyl)acetamidine + ATP = 5-amino-1-(5-phospho-beta-D-ribosyl)imidazole + ADP + phosphate + H(+). It functions in the pathway purine metabolism; IMP biosynthesis via de novo pathway; 5-amino-1-(5-phospho-D-ribosyl)imidazole from N(2)-formyl-N(1)-(5-phospho-D-ribosyl)glycinamide: step 2/2. The polypeptide is Phosphoribosylformylglycinamidine cyclo-ligase (Finegoldia magna (strain ATCC 29328 / DSM 20472 / WAL 2508) (Peptostreptococcus magnus)).